We begin with the raw amino-acid sequence, 96 residues long: DNA-binding protein HmvA (96 aa).

The tract at residues 52 to 55 (KTIK) is interaction with DNA.

It belongs to the archaeal histone HMF family. As to quaternary structure, homodimer. Dimers then assemble into higher oligomers, with the DNA wrapped around the protein core.

Its subcellular location is the cytoplasm. It localises to the chromosome. Its function is as follows. Binds and compact DNA (95 to 150 base pairs) to form nucleosome-like structures that contain positive DNA supercoils. Increases the resistance of DNA to thermal denaturation (in vitro). The polypeptide is DNA-binding protein HmvA (hmvA) (Methanocaldococcus jannaschii (strain ATCC 43067 / DSM 2661 / JAL-1 / JCM 10045 / NBRC 100440) (Methanococcus jannaschii)).